Consider the following 133-residue polypeptide: FPRL1 inhibitory protein (133 aa).

Residues 1 to 28 (MKKNITKTIIASTVIAAGLLTQTNDAKA) form the signal peptide.

The protein belongs to the CHIPS/FLIPr family.

Its subcellular location is the secreted. Functionally, may be involved in countering the first line of host defense mechanisms. Impairs the leukocyte response to FPRL1 agonists by binding directly to host FPRL1. The chain is FPRL1 inhibitory protein (flr) from Staphylococcus aureus (strain Mu50 / ATCC 700699).